Here is a 337-residue protein sequence, read N- to C-terminus: MNHSSKKNKNRILRNKARIYCDVNLHKPKEYWNYEALNVKWETQDDYEIIRKIGRGKYSEVFEGANIKNNEKCVIKVLKPVKKKKIKREIKILQNLCGGPNIITLYDVVRDPQSKTPSLIFEYINNTDFKHLSPTLTDFDVRYYIRELLHALDFCHSNGIMHRDVKPSNVMIDHQKRKLYLIDWGLAEFYHPNQDYNVRVASRPYKGPELLVDMEDYDYSLDMWSLGCMFAGMLFQKDPFFHGHDNIDQLVKIVKILGTEEFYAYLDKYGIVVDHTILSIIGKHPKKPWSRFITKENQHLAVPEAIDFLEKLLRYDPAERLTTREAMEHPYFKPLSH.

The Protein kinase domain maps to 47–332; sequence YEIIRKIGRG…TREAMEHPYF (286 aa). ATP is bound by residues 53 to 61 and Lys76; that span reads IGRGKYSEV. The Proton acceptor role is filled by Asp164.

This sequence belongs to the protein kinase superfamily. CMGC Ser/Thr protein kinase family. CK2 subfamily. In terms of assembly, tetramer of two alpha and two beta chains.

The catalysed reaction is L-seryl-[protein] + ATP = O-phospho-L-seryl-[protein] + ADP + H(+). The enzyme catalyses L-threonyl-[protein] + ATP = O-phospho-L-threonyl-[protein] + ADP + H(+). Its function is as follows. Casein kinases are operationally defined by their preferential utilization of acidic proteins such as caseins as substrates. The alpha chain contains the catalytic site. The chain is Casein kinase II subunit alpha (casK) from Dictyostelium discoideum (Social amoeba).